The sequence spans 1226 residues: uncharacterized protein (1226 aa).

The protein belongs to the Mg-chelatase subunit H family.

This is an uncharacterized protein from Methanocaldococcus jannaschii (strain ATCC 43067 / DSM 2661 / JAL-1 / JCM 10045 / NBRC 100440) (Methanococcus jannaschii).